The sequence spans 523 residues: 11-oxo-beta-amyrin 30-oxidase (523 aa).

The chain crosses the membrane as a helical span at residues 9 to 29 (AIWVVLTVILAAIPIWVCHMV). Residue cysteine 471 coordinates heme.

This sequence belongs to the cytochrome P450 family. Requires heme as cofactor. In terms of tissue distribution, expressed in roots, stolons and stems. Not detected in leaves.

Its subcellular location is the membrane. It catalyses the reaction 11-oxo-beta-amyrin + 3 reduced [NADPH--hemoprotein reductase] + 3 O2 = glycyrrhetinate + 3 oxidized [NADPH--hemoprotein reductase] + 4 H2O + 4 H(+). The catalysed reaction is 11-oxo-beta-amyrin + reduced [NADPH--hemoprotein reductase] + O2 = 30-hydroxy-11-oxo-beta-amyrin + oxidized [NADPH--hemoprotein reductase] + H2O + H(+). The enzyme catalyses 30-hydroxy-11-oxo-beta-amyrin + reduced [NADPH--hemoprotein reductase] + O2 = glycyrrhetaldehyde + oxidized [NADPH--hemoprotein reductase] + 2 H2O + H(+). It carries out the reaction glycyrrhetaldehyde + reduced [NADPH--hemoprotein reductase] + O2 = glycyrrhetinate + oxidized [NADPH--hemoprotein reductase] + H2O + 2 H(+). Its function is as follows. Involved in the biosynthesis of Glycyrrhetinic acid (GA), a natural product which exhibits anti-inflammatory activity. Involved in the biosynthesis of the triterpenoid saponin glycyrrhizin. Catalyzes three sequential oxidation steps at C-30 of 11-oxo-beta-amyrin. Also able to catalyze C-30 monohydroxylation of beta-amyrin to produce 30-hydroxy-beta-amyrin. May be also responsible for the oxidation at positions C-22 and C-29 in addition to C-30. In Glycyrrhiza uralensis (Chinese licorice), this protein is 11-oxo-beta-amyrin 30-oxidase.